A 206-amino-acid polypeptide reads, in one-letter code: Cytidylate kinase (206 aa).

9-17 (GPAAAGKGT) is an ATP binding site. Residues 155 to 168 (LRERDRRDREREAA) are compositionally biased toward basic and acidic residues. The tract at residues 155 to 174 (LRERDRRDREREAAPLRPAP) is disordered.

It belongs to the cytidylate kinase family. Type 1 subfamily.

It is found in the cytoplasm. It catalyses the reaction CMP + ATP = CDP + ADP. The catalysed reaction is dCMP + ATP = dCDP + ADP. The sequence is that of Cytidylate kinase from Cereibacter sphaeroides (strain KD131 / KCTC 12085) (Rhodobacter sphaeroides).